The sequence spans 282 residues: HTH-type transcriptional activator RhaR (282 aa).

Residues 179 to 277 (DKLITRLAAS…GMTPSQWRHL (99 aa)) enclose the HTH araC/xylS-type domain. DNA-binding regions (H-T-H motif) lie at residues 196-217 (DKFC…RQQT) and 244-267 (ISDI…TRET).

In terms of assembly, binds DNA as a dimer.

The protein localises to the cytoplasm. Functionally, activates expression of the rhaSR operon in response to L-rhamnose. The protein is HTH-type transcriptional activator RhaR of Shigella dysenteriae serotype 1 (strain Sd197).